Here is a 541-residue protein sequence, read N- to C-terminus: Circadian clock oscillator protein KaiC (541 aa).

A disordered region spans residues 1–40; sequence MNQSLGPSEPEKPQDNTAEDSTEPTPDNHRADLSELRGIP. KaiC domains follow at residues 21-268 and 282-541; these read STEP…INIF and VRVS…EEGL. The span at 26–35 shows a compositional bias: basic and acidic residues; the sequence is PDNHRADLSE. The ATP site is built by glycine 70, threonine 71, glycine 72, lysine 73, threonine 74, leucine 75, serine 110, lysine 245, leucine 246, arginine 247, threonine 249, histidine 251, threonine 261, threonine 311, glycine 312, threonine 313, glycine 314, lysine 315, and threonine 316. Threonine 74 contributes to the Mg(2+) binding site. The Mg(2+) site is built by threonine 316 and glutamate 339. ATP is bound at residue tryptophan 352. Serine 452 bears the Phosphoserine; by autocatalysis mark. Phosphothreonine; by autocatalysis is present on threonine 453. Residues arginine 472, lysine 478, methionine 479, arginine 480, serine 482, histidine 484, and lysine 486 each contribute to the ATP site.

The protein belongs to the KaiC family. Homohexamer; hexamerization is dependent on ATP-binding. The KaiABC complex composition changes during the circadian cycle to control KaiC phosphorylation. Complexes KaiC(6), KaiA(2-4):KaiC(6), KaiB(6):KaiC(6) and KaiC(6):KaiB(6):KaiA(12) are among the most important forms, many form cooperatively. KaiC interacts with SasA, activating its autokinase function and leading to RpaA activation. Mg(2+) is required as a cofactor. Phosphorylated on serine and threonine residues by autocatalysis. Has a 4 step phosphorylation cycle; the autokinase acts first on Thr-453, then Ser-452. When Ser-452 is modified KaiC switches to an autophosphatase mode, acting first on phospho-Thr-453 then phospho-Ser-452.

The catalysed reaction is L-seryl-[protein] + ATP = O-phospho-L-seryl-[protein] + ADP + H(+). It catalyses the reaction L-threonyl-[protein] + ATP = O-phospho-L-threonyl-[protein] + ADP + H(+). The enzyme catalyses ATP + H2O = ADP + phosphate + H(+). The interaction with KaiA enhances its phosphorylation status, while the interaction with KaiB decreases it. Its function is as follows. Central component of the KaiABC oscillator complex, which constitutes the main circadian regulator in cyanobacteria. Complex composition changes during the circadian cycle to control KaiC phosphorylation. KaiA stimulates KaiC autophosphorylation, while KaiB sequesters KaiA, leading to KaiC autodephosphorylation. Clock output pathways impact the RpaA transcriptional regulator. KaiC enhances the autophosphorylation activity of SasA, which then transfers its phosphate group to RpaA to activate it. KaiB and KaiC together enhance the phospho-RpaA dephosphatase activity of CikA. Functionally, has a weak, temperature-independent ATPase activity; ATPase activity defines the circadian period. The phosphorylation state of KaiC modulates its ATPase activity and effects KaiB binding. The chain is Circadian clock oscillator protein KaiC from Parathermosynechococcus lividus (Thermostichus lividus).